The primary structure comprises 431 residues: Na(+)-translocating NADH-quinone reductase subunit F (431 aa).

A helical membrane pass occupies residues 9 to 29 (FICIASLIFCAIGVILAGVIL). The 2Fe-2S ferredoxin-type domain occupies 39–133 (HPCKLKINDN…DMSLEIEERY (95 aa)). [2Fe-2S] cluster-binding residues include cysteine 76, cysteine 82, cysteine 85, and cysteine 117. The 151-residue stretch at 136 to 286 (ASSWEGTVIS…SGPYGESFMK (151 aa)) folds into the FAD-binding FR-type domain. The interval 289 to 413 (DRPLIFLIGG…PLHNSSILKL (125 aa)) is catalytic.

This sequence belongs to the NqrF family. As to quaternary structure, composed of six subunits; NqrA, NqrB, NqrC, NqrD, NqrE and NqrF. [2Fe-2S] cluster serves as cofactor. The cofactor is FAD.

It localises to the cell inner membrane. The enzyme catalyses a ubiquinone + n Na(+)(in) + NADH + H(+) = a ubiquinol + n Na(+)(out) + NAD(+). NQR complex catalyzes the reduction of ubiquinone-1 to ubiquinol by two successive reactions, coupled with the transport of Na(+) ions from the cytoplasm to the periplasm. The first step is catalyzed by NqrF, which accepts electrons from NADH and reduces ubiquinone-1 to ubisemiquinone by a one-electron transfer pathway. The protein is Na(+)-translocating NADH-quinone reductase subunit F of Chlamydia pneumoniae (Chlamydophila pneumoniae).